The following is a 199-amino-acid chain: Chromophore lyase CpcT/CpeT (199 aa).

This sequence belongs to the CpcT/CpeT biliprotein lyase family.

Covalently attaches a chromophore to Cys residue(s) of phycobiliproteins. The chain is Chromophore lyase CpcT/CpeT from Prochlorococcus marinus (strain NATL1A).